The following is a 228-amino-acid chain: Clathrin light chain B (228 aa).

Met-1 carries the blocked amino end (Met) modification. Residues 1-17 are compositionally biased toward low complexity; it reads MADDFGFFSSSESGAPE. The interval 1–80 is disordered; the sequence is MADDFGFFSS…VNGDVFQEAN (80 aa). A phosphoserine mark is found at Ser-11 and Ser-13. An involved in binding clathrin heavy chain region spans residues 92–154; it reads ADRLTQEPES…QVEKNKINNR (63 aa). At Thr-186 the chain carries Phosphothreonine. Cysteines 198 and 208 form a disulfide. The residue at position 203 (Lys-203) is an N6-acetyllysine. Ser-216 is modified (phosphoserine).

It belongs to the clathrin light chain family. As to quaternary structure, clathrin coats are formed from molecules containing 3 heavy chains and 3 light chains. Interacts (via N-terminus) with HIP1. Interacts with HIP1R.

It is found in the cytoplasmic vesicle membrane. The protein resides in the membrane. Its subcellular location is the coated pit. Clathrin is the major protein of the polyhedral coat of coated pits and vesicles. In Bos taurus (Bovine), this protein is Clathrin light chain B (CLTB).